The sequence spans 166 residues: Chorion protein S18 (166 aa).

The signal sequence occupies residues 1-17; it reads MMKFMCLFVCAIAAVSA.

Belongs to the chorion protein S15/S18 family.

Its subcellular location is the secreted. Functionally, chorion membrane (egg shell) protein; plays a role in protecting the egg from the environment. This Drosophila grimshawi (Hawaiian fruit fly) protein is Chorion protein S18 (Cp18).